The primary structure comprises 300 residues: MKIDLTALVTESRNKASENIDVLSTVEMLTVINQEDQKVALAVEAILPQIADVVDAIAVAFQSGGRLIYTGAGTSGRLGILDASECPPTYGSNPDLVVGLIAGGHKAILKAVENAEDNRELGASDLQDLGLNEKDVLVGIAASGRTPYVLGAMEYAKSVGATVATLSCNPNSPMTELADINMTPVVGPEVVTGSSRMKAGTAQKLVLNMLTTGAMIRTGKVFGNLMVDVEATNAKLVQRQKNIVIEATGCSEVEASEALSQCDNHCKTAILMVLSGLDAQSAKAKLAQHNGFIRNALSDQ.

The SIS domain maps to 57–220; it reads IAVAFQSGGR…TTGAMIRTGK (164 aa). Glu-85 (proton donor) is an active-site residue. Glu-116 is an active-site residue.

The protein belongs to the GCKR-like family. MurNAc-6-P etherase subfamily. As to quaternary structure, homodimer.

It carries out the reaction N-acetyl-D-muramate 6-phosphate + H2O = N-acetyl-D-glucosamine 6-phosphate + (R)-lactate. Its pathway is amino-sugar metabolism; 1,6-anhydro-N-acetylmuramate degradation. The protein operates within amino-sugar metabolism; N-acetylmuramate degradation. It participates in cell wall biogenesis; peptidoglycan recycling. Functionally, specifically catalyzes the cleavage of the D-lactyl ether substituent of MurNAc 6-phosphate, producing GlcNAc 6-phosphate and D-lactate. Together with AnmK, is also required for the utilization of anhydro-N-acetylmuramic acid (anhMurNAc) either imported from the medium or derived from its own cell wall murein, and thus plays a role in cell wall recycling. This Aliivibrio fischeri (strain MJ11) (Vibrio fischeri) protein is N-acetylmuramic acid 6-phosphate etherase.